We begin with the raw amino-acid sequence, 126 residues long: Aspartate 1-decarboxylase (126 aa).

Catalysis depends on S25, which acts as the Schiff-base intermediate with substrate; via pyruvic acid. S25 bears the Pyruvic acid (Ser) mark. T57 contributes to the substrate binding site. Catalysis depends on Y58, which acts as the Proton donor. A substrate-binding site is contributed by 73–75 (GAA).

It belongs to the PanD family. In terms of assembly, heterooctamer of four alpha and four beta subunits. Requires pyruvate as cofactor. Post-translationally, is synthesized initially as an inactive proenzyme, which is activated by self-cleavage at a specific serine bond to produce a beta-subunit with a hydroxyl group at its C-terminus and an alpha-subunit with a pyruvoyl group at its N-terminus.

The protein resides in the cytoplasm. The catalysed reaction is L-aspartate + H(+) = beta-alanine + CO2. It participates in cofactor biosynthesis; (R)-pantothenate biosynthesis; beta-alanine from L-aspartate: step 1/1. Functionally, catalyzes the pyruvoyl-dependent decarboxylation of aspartate to produce beta-alanine. This Sodalis glossinidius (strain morsitans) protein is Aspartate 1-decarboxylase.